A 353-amino-acid chain; its full sequence is ATP-dependent kinase YFH7 (353 aa).

31-39 (GPPGSGKST) provides a ligand contact to ATP.

It belongs to the YFH7 family.

ATP-dependent kinase that could be involved in endoplasmic reticulum membrane assembly. This Kluyveromyces lactis (strain ATCC 8585 / CBS 2359 / DSM 70799 / NBRC 1267 / NRRL Y-1140 / WM37) (Yeast) protein is ATP-dependent kinase YFH7 (YFH7).